The sequence spans 31 residues: SIPCGESCVFIPCTVTALLGCSCKSKVCYKN.

The cyclopeptide (Ser-Asn) cross-link spans 1–31 (SIPCGESCVFIPCTVTALLGCSCKSKVCYKN). Cystine bridges form between C4/C21, C8/C23, and C13/C28.

Belongs to the cyclotide family. Bracelet subfamily. This is a cyclic peptide.

Its function is as follows. Probably participates in a plant defense mechanism. Has antibiotic activity. Inhibits the cytopathic effects and replication of the human immunodeficiency virus. Active against both Gram-positive and Gram-negative bacteria. This Psychotria longipes protein is Cyclopsychotride-A.